The chain runs to 138 residues: Histone H2AX (138 aa).

A disordered region spans residues 1–23 (MSTTGKGGKAKGKTASSKQVSRS). The residue at position 2 (S2) is an N-acetylserine. 5 positions are modified to N6-acetyllysine: K6, K9, K11, K13, and K18. S123 carries the phosphoserine modification. Residue K124 forms a Glycyl lysine isopeptide (Lys-Gly) (interchain with G-Cter in ubiquitin) linkage. Phosphoserine is present on residues S125, S130, and S135. Positions 135–136 (SQ) match the [ST]-Q motif motif.

Belongs to the histone H2A family. In terms of assembly, the nucleosome is a histone octamer containing two molecules each of H2A, H2B, H3 and H4 assembled in one H3-H4 heterotetramer and two H2A-H2B heterodimers. The octamer wraps approximately 147 bp of DNA. In terms of processing, monoubiquitination of Lys-124 gives a specific tag for epigenetic transcriptional repression. Acetylation occurs almost exclusively in the MAC.

It is found in the nucleus. Its subcellular location is the chromosome. Its function is as follows. Core component of nucleosome. Nucleosomes wrap and compact DNA into chromatin, limiting DNA accessibility to the cellular machineries which require DNA as a template. Histones thereby play a central role in transcription regulation, DNA repair, DNA replication and chromosomal stability. DNA accessibility is regulated via a complex set of post-translational modifications of histones, also called histone code, and nucleosome remodeling. In Tetrahymena pyriformis, this protein is Histone H2AX (HTA1).